A 425-amino-acid polypeptide reads, in one-letter code: Glyco-Gag protein (425 aa).

At 1-54 (MSRASSGTATGARLFGISSVLGEYRVLIGDEGAGPSRSPSEVSFSVWYRSRAAR) the chain is on the cytoplasmic side. A helical membrane pass occupies residues 55–75 (LVIVCLVASFLVPCLTFLIAE). Residues 76-425 (TVMGQTITTP…VVQGKEETPA (350 aa)) lie on the Extracellular side of the membrane. The N-linked (GlcNAc...) asparagine; by host glycan is linked to Asn-137. The interval 174-285 (VRPFLPPPKP…LREGPNNRPQ (112 aa)) is disordered. Residues 177–196 (FLPPPKPPTSLPQPLSPQPS) show a composition bias toward pro residues. The segment covering 197–209 (APLTSSLYPVLPK) has biased composition (low complexity). 2 stretches are compositionally biased toward pro residues: residues 213 to 223 (PKPPVLPPDPS) and 233 to 248 (EPPP…PSGP).

Post-translationally, glycosylated by host. Cleaved by host near the middle of the molecule, releasing the c-terminal half containing capsid and nucleoprotein domains op GAG.

The protein resides in the host cell membrane. Functionally, plays a role in viral particle release. Presumably acts by facilitating the fission of the virion bud at the cell surface. This chain is Glyco-Gag protein, found in Felidae (cat family).